Reading from the N-terminus, the 227-residue chain is Holin (227 aa).

Residues 1 to 33 are Cytoplasmic-facing; the sequence is MVLVRGGYKLEKFLQLLTVLLQEAKDPASLLKR. The chain crosses the membrane as a helical; Signal-anchor for type II membrane protein span at residues 34-48; the sequence is LLTILVAVIIFLFVS. Over 49–227 the chain is Periplasmic; the sequence is NTSEVMSFLK…PQQRSLGRSI (179 aa). An intrachain disulfide couples cysteine 178 to cysteine 216.

The protein belongs to the T4likevirus holin family. Homomultimer. Heterotetramer composed of 2 holin and 2 antiholin. The holin-antiholin complex binds dsDNA. Interacts (via C-terminus) with antiholin (via C-terminus); this interaction blocks the holin homomultimerization and delays host cell lysis. Interacts (via N-terminus) with the lysis inhibition accessory protein rIII; this interaction stabilizes the holin-antiholin complex thereby resulting in a robust block of the hole formation. Disulfide bond is required for functionality.

The protein resides in the host cell inner membrane. Its function is as follows. Accumulates harmlessly in the cytoplasmic membrane until it reaches a critical concentration that triggers the formation of micron-scale pores (holes) causing host cell membrane disruption and endolysin escape into the periplasmic space. Determines the precise timing of host cell lysis. Regulated by specific antiholins that somehow sense superinfections and then delay lysis. Participates with the endolysin and spanin proteins in the sequential events which lead to the programmed host cell lysis releasing the mature viral particles from the host cell. This Escherichia phage T5 (Enterobacteria phage T5) protein is Holin.